A 620-amino-acid chain; its full sequence is Preterminal protein (620 aa).

Residues R356–R365 carry the Nuclear localization signal motif. The residue at position 545 (S545) is an O-(5'-phospho-DNA)-serine.

This sequence belongs to the adenoviridae terminal protein family. Heterodimer with the polymerase; this heterodimer binds to bp 9 to 18 of the genome. Interacts with host POU2F1; POU2F1 binds to the auxiliary sequences in the inverted terminal repeats and tethers the pTP-POL heterodimer to the origin DNA thereby participating in the assembly of the pre-initiation complex (POL-TP-DBP-NFIA-POU2F1). In terms of processing, preterminal protein is used to replicate viral genome, upon genomic encapsidation it is processed first into iTP and finally into TP by adenovirus protease.

The protein resides in the host nucleus matrix. Protein covalently bound to the viral DNA that acts as a primer for viral genomic replication by DNA strand displacement. Assembles on the viral origin of replication in an initiation complex with viral polymerase, DBP, host NFIA and host POU2F1/OCT1. During initiation, the polymerase covalently couples the first dCTP with Ser-580 of pTP. The terminal protein stimulates the template activity over 20 fold compared to protein-free templates. Neo-synthesized viral genomes are linked to two preterminal proteins, one for each 5' end. These new genomes are encapsidated in the nucleus, and during capsid maturation by viral protease, preterminal protein is first cleaved into intermediary (iTP), then into mature TP. May play a role in host nuclear matrix localization of genomic DNA. The sequence is that of Preterminal protein from Bovine adenovirus 2 (BAdV-2).